The chain runs to 512 residues: Transmembrane protein 102 (512 aa).

Over 1–267 (MASAVWGNAP…EAWPTLCPAQ (267 aa)) the chain is Extracellular. Positions 168–258 (PVPGGRDWIH…PGPQPSEARE (91 aa)) are disordered. 2 stretches are compositionally biased toward basic and acidic residues: residues 174–186 (DWIHPTDSREGPR) and 195–209 (PHSDIIEPEAHESLE). The span at 210 to 226 (KSPSNVSVPESPQQNLT) shows a compositional bias: polar residues. Residues 268-284 (VAAWFFASLAAVAESLF) traverse the membrane as a helical segment. The Cytoplasmic portion of the chain corresponds to 285–512 (PVPGAPRLVH…GLAGVGAGSH (228 aa)).

As to quaternary structure, interacts with CSF2RB; this interaction occurs preferentially in the absence of CSF2.

The protein localises to the cell membrane. Its function is as follows. Selectively involved in CSF2 deprivation-induced apoptosis via a mitochondria-dependent pathway. The protein is Transmembrane protein 102 (TMEM102) of Bos taurus (Bovine).